The primary structure comprises 552 residues: Small ribosomal subunit protein bS1 (552 aa).

S1 motif domains lie at 31-101 (TIKE…ISQQ), 116-179 (NAII…ISRK), 200-268 (TEPV…LSIK), 285-355 (GYAI…VSLK), 372-440 (GDIV…LSAK), and 457-521 (DSVI…ASVH).

This sequence belongs to the bacterial ribosomal protein bS1 family.

Binds mRNA; thus facilitating recognition of the initiation point. It is needed to translate mRNA with a short Shine-Dalgarno (SD) purine-rich sequence. This chain is Small ribosomal subunit protein bS1 (rpsA), found in Helicobacter pylori (strain J99 / ATCC 700824) (Campylobacter pylori J99).